Consider the following 143-residue polypeptide: MSILSEFKEFAVKGNVIDLAVGVIIGAAFGKIVDSIVADIIMPVVGLVFGKLDFSNLYVVLGTVPAGVANNLADLKKAGVPVLAYGNFITIAVNFVILAFIIFMMVKQINKLRKTHAEAPAAPVAPPEDIALLREIRDSLKRP.

3 helical membrane-spanning segments follow: residues 21-41 (VGVIIGAAFGKIVDSIVADII), 44-64 (VVGLVFGKLDFSNLYVVLGTV), and 86-106 (GNFITIAVNFVILAFIIFMMV).

This sequence belongs to the MscL family. Homopentamer.

It is found in the cell inner membrane. Functionally, channel that opens in response to stretch forces in the membrane lipid bilayer. May participate in the regulation of osmotic pressure changes within the cell. The polypeptide is Large-conductance mechanosensitive channel (Variovorax paradoxus (strain S110)).